The sequence spans 495 residues: Putative aldehyde dehydrogenase AldA (495 aa).

Residue 212–218 (GKGSESG) coordinates NAD(+). Catalysis depends on residues Glu-256 and Cys-290.

The protein belongs to the aldehyde dehydrogenase family.

It catalyses the reaction an aldehyde + NAD(+) + H2O = a carboxylate + NADH + 2 H(+). This is Putative aldehyde dehydrogenase AldA (aldA) from Staphylococcus aureus (strain Mu50 / ATCC 700699).